Reading from the N-terminus, the 894-residue chain is DNA mismatch repair protein MutS (894 aa).

An ATP-binding site is contributed by 632-639; sequence GPNMGGKS.

Belongs to the DNA mismatch repair MutS family.

In terms of biological role, this protein is involved in the repair of mismatches in DNA. It is possible that it carries out the mismatch recognition step. This protein has a weak ATPase activity. The polypeptide is DNA mismatch repair protein MutS (Paraburkholderia xenovorans (strain LB400)).